The primary structure comprises 407 residues: B3 domain-containing protein Os07g0183200 (407 aa).

The segment at residues 124–227 (FVKTLMISDF…ELYVGVRRQR (104 aa)) is a DNA-binding region (TF-B3).

It is found in the nucleus. In Oryza sativa subsp. japonica (Rice), this protein is B3 domain-containing protein Os07g0183200.